A 231-amino-acid polypeptide reads, in one-letter code: Heptaprenylglyceryl phosphate synthase (231 aa).

Residue K12 coordinates sn-glycerol 1-phosphate. Positions 14 and 40 each coordinate Mg(2+). Sn-glycerol 1-phosphate is bound by residues 159–164, G189, and 209–210; these read YMEYSG and GN.

Belongs to the GGGP/HepGP synthase family. Group I subfamily. Homodimer. It depends on Mg(2+) as a cofactor.

The enzyme catalyses sn-glycerol 1-phosphate + all-trans-heptaprenyl diphosphate = 3-heptaprenyl-sn-glycero-1-phosphate + diphosphate. It participates in membrane lipid metabolism; glycerophospholipid metabolism. Prenyltransferase that catalyzes in vivo the transfer of the heptaprenyl moiety of heptaprenyl pyrophosphate (HepPP; 35 carbon atoms) to the C3 hydroxyl of sn-glycerol-1-phosphate (G1P), producing heptaprenylglyceryl phosphate (HepGP). This reaction is an ether-bond-formation step in the biosynthesis of archaea-type G1P-based membrane lipids found in Bacillales. This chain is Heptaprenylglyceryl phosphate synthase, found in Brevibacillus brevis (strain 47 / JCM 6285 / NBRC 100599).